A 277-amino-acid polypeptide reads, in one-letter code: Large ribosomal subunit protein uL2 (277 aa).

The disordered stretch occupies residues 222–277 (GVAMNPIDHPHGGGEGRTSGGRHPVTPWGKPTKGKKTRTNKSTDKFILLSRHKRKK).

Belongs to the universal ribosomal protein uL2 family. As to quaternary structure, part of the 50S ribosomal subunit. Forms a bridge to the 30S subunit in the 70S ribosome.

Its function is as follows. One of the primary rRNA binding proteins. Required for association of the 30S and 50S subunits to form the 70S ribosome, for tRNA binding and peptide bond formation. It has been suggested to have peptidyltransferase activity; this is somewhat controversial. Makes several contacts with the 16S rRNA in the 70S ribosome. The sequence is that of Large ribosomal subunit protein uL2 from Bradyrhizobium sp. (strain ORS 278).